Reading from the N-terminus, the 967-residue chain is Glutamate receptor 2.6 (967 aa).

An N-terminal signal peptide occupies residues 1 to 31 (MSLFNHLLSRALPLWLLFFINFLVLLGKSQQ). Over 32-590 (EVLQVQVGIV…WVFLKPLTRE (559 aa)) the chain is Extracellular. Residues N45, N57, N121, N336, N345, N424, and N550 are each glycosylated (N-linked (GlcNAc...) asparagine). A helical transmembrane segment spans residues 591-611 (LWFLTAASFLYIGIMVWIFEY). The Cytoplasmic portion of the chain corresponds to 612–621 (QASGDFRKQS). A helical transmembrane segment spans residues 622–642 (IINKISNVFYFSFSTLFFAHM). The Cytoplasmic segment spans residues 643-651 (RPSESIFTR). The chain crosses the membrane as a helical span at residues 652–672 (VLVVVWCFVLLILTQSYTATL). The Extracellular segment spans residues 673–832 (TSMLTVQELR…DSPIRLDHHS (160 aa)). N795 is a glycosylation site (N-linked (GlcNAc...) asparagine). A helical membrane pass occupies residues 833-853 (FEALFTIVFVVSMLLLLAMLV). Residues 854-967 (CRRYRQESKS…AALFSRIKSA (114 aa)) are Cytoplasmic-facing. A compositionally biased stretch (polar residues) spans 864 to 874 (GEINANNSPTD). Positions 864–913 (GEINANNSPTDGNMRAPPNQPTDDNMRAPTSPPIDDQVLEPPGPALNEAD) are disordered.

The protein belongs to the glutamate-gated ion channel (TC 1.A.10.1) family. May form heteromers. In terms of tissue distribution, expressed predominantly in roots.

The protein localises to the membrane. Glutamate-gated receptor that probably acts as a non-selective cation channel. May be involved in light-signal transduction and calcium homeostasis via the regulation of calcium influx into cells. The sequence is that of Glutamate receptor 2.6 (GLR2.6) from Arabidopsis thaliana (Mouse-ear cress).